The chain runs to 293 residues: Proline iminopeptidase (293 aa).

An AB hydrolase-1 domain is found at 28 to 277 (KPLVLLHGGP…FSRHMPFVEE (250 aa)). Ser-104 acts as the Nucleophile in catalysis. Asp-244 is an active-site residue. The active-site Proton donor is the His-271.

This sequence belongs to the peptidase S33 family.

It carries out the reaction Release of N-terminal proline from a peptide.. Its function is as follows. Releases the N-terminal proline from various substrates. In Clostridium botulinum (strain Hall / ATCC 3502 / NCTC 13319 / Type A), this protein is Proline iminopeptidase.